The sequence spans 429 residues: Adenylosuccinate synthetase (429 aa).

GTP contacts are provided by residues 12-18 and 40-42; these read GDEGKGK and GHT. The Proton acceptor role is filled by aspartate 13. Residues aspartate 13 and glycine 40 each contribute to the Mg(2+) site. IMP contacts are provided by residues 13–16, 38–41, threonine 129, arginine 143, glutamine 223, threonine 238, and arginine 302; these read DEGK and NAGH. Histidine 41 functions as the Proton donor in the catalytic mechanism. 298-304 contacts substrate; the sequence is VVTGRKR. GTP contacts are provided by residues arginine 304, 330-332, and 412-414; these read KLD and STS.

The protein belongs to the adenylosuccinate synthetase family. As to quaternary structure, homodimer. Mg(2+) serves as cofactor.

It is found in the cytoplasm. The enzyme catalyses IMP + L-aspartate + GTP = N(6)-(1,2-dicarboxyethyl)-AMP + GDP + phosphate + 2 H(+). The protein operates within purine metabolism; AMP biosynthesis via de novo pathway; AMP from IMP: step 1/2. Plays an important role in the de novo pathway of purine nucleotide biosynthesis. Catalyzes the first committed step in the biosynthesis of AMP from IMP. The chain is Adenylosuccinate synthetase from Brucella ovis (strain ATCC 25840 / 63/290 / NCTC 10512).